The chain runs to 260 residues: Endomucin (260 aa).

A signal peptide spans 1–18; it reads MELLQVTILFLLPSICSS. 4 N-linked (GlcNAc...) asparagine glycosylation sites follow: N19, N28, N97, and N103. Residues 19–189 are Extracellular-facing; it reads NSTGVLEAAN…TSATSRSYSS (171 aa). Composition is skewed to polar residues over residues 119 to 133 and 145 to 170; these read QSSKPKTETQSSIKT and ASPSETGTLSSIPVTIPENTSQSQVI. The disordered stretch occupies residues 119-182; the sequence is QSSKPKTETQ…EGGKNASTSA (64 aa). N-linked (GlcNAc...) asparagine glycans are attached at residues N163 and N177. The helical transmembrane segment at 190–210 threads the bilayer; that stretch reads IILPVVIALIVITLSVFVLVG. The Cytoplasmic segment spans residues 211–260; sequence LYRMCWKADPGTPENGNDQPQSDKESVKLLTVKTISHESGEHSAQGKTKN. Phosphoserine is present on S236.

Highly O-glycosylated. Sialic acid-rich glycoprotein.

The protein localises to the membrane. Its function is as follows. Endothelial sialomucin, also called endomucin or mucin-like sialoglycoprotein, which interferes with the assembly of focal adhesion complexes and inhibits interaction between cells and the extracellular matrix. This chain is Endomucin (EMCN), found in Pongo abelii (Sumatran orangutan).